The sequence spans 368 residues: Core-capsid bridging protein (368 aa).

Disordered regions lie at residues 17–49 and 307–340; these read EIYGPPKKEEQDYKPRKLKRVKKKKKDDDDELD and GYRGYTYRPRRRATTRRRTTTGTRRRRRRRQPVL. Residues 22–31 are compositionally biased toward basic and acidic residues; sequence PKKEEQDYKP. Composition is skewed to basic residues over residues 32–41 and 314–337; these read RKLKRVKKKK and RPRRRATTRRRTTTGTRRRRRRRQ.

The protein belongs to the adenoviridae core-capsid bridging protein family. In terms of assembly, monomer. Homodimer. Exists in equilibrium between monomers and dimers in solution. Interacts with the histone-like nucleoprotein; this interactions bridge the virus core to the capsid. Interacts with core protein X; this interactions bridge the virus core to the capsid. Interacts with the endosome lysis protein VI; this interactions bridge the virus core to the capsid. Interacts with the peripentonal hexons. Interacts with host NPM1; this interaction might play a role in virus assembly. Post-translationally, during virion entry, is ubiquitinated at the nuclear pore complex by host MIB1. This dissociates viral genomic DNA from capsid and allows genome delivery into nucleus for infection.

The protein resides in the virion. It localises to the host nucleus. Its subcellular location is the host nucleolus. In terms of biological role, associates loosely with the viral DNA to form an outer shell around the nucleoprotein-DNA complex and links it with the capsid by binding the endosome lysis protein. During entry, secures the viral genome in the capsid until it reaches the nuclear pore complex, preventing innate immunity responses. Dissociates from the viral genome at nuclear pore. Might be involved in nuclear capsid assembly of the viral particles through its association with NPM1/nucleophosmin. This Human adenovirus C serotype 5 (HAdV-5) protein is Core-capsid bridging protein.